The primary structure comprises 197 residues: MAERKAYVERNTLETQIKASINLDGTGKARFDIGVPFLEHMLDQIARHGLIDLDIECKGDLAIDDHHTVEDVGITVGQAFSQAIGDKKGIRRYGHAYVPLDEALSRVVIDFSGRPGLQMHVPYTRATVGGFDVDLFQEFFQGFVNHANVTLHIDNLRGTNTHHQIETVFKAFGRALRMAVELDERMAGQMPSTKGVL.

The protein belongs to the imidazoleglycerol-phosphate dehydratase family.

The protein localises to the cytoplasm. It catalyses the reaction D-erythro-1-(imidazol-4-yl)glycerol 3-phosphate = 3-(imidazol-4-yl)-2-oxopropyl phosphate + H2O. It functions in the pathway amino-acid biosynthesis; L-histidine biosynthesis; L-histidine from 5-phospho-alpha-D-ribose 1-diphosphate: step 6/9. The polypeptide is Imidazoleglycerol-phosphate dehydratase (Pseudomonas syringae pv. syringae (strain B728a)).